Consider the following 321-residue polypeptide: Cytochrome f (321 aa).

Positions 1-35 (MQNTNTLNWINKLIYLSISIPIFFLILVTTYPNSV) are cleaved as a signal peptide. Heme is bound by residues Tyr38, Cys58, Cys61, and His62. Residues 287–307 (MEGLILFFISVILAQVFLVLK) form a helical membrane-spanning segment.

It belongs to the cytochrome f family. The 4 large subunits of the cytochrome b6-f complex are cytochrome b6, subunit IV (17 kDa polypeptide, petD), cytochrome f and the Rieske protein, while the 4 small subunits are PetG, PetL, PetM and PetN. The complex functions as a dimer. It depends on heme as a cofactor.

It is found in the plastid. The protein resides in the chloroplast thylakoid membrane. Functionally, component of the cytochrome b6-f complex, which mediates electron transfer between photosystem II (PSII) and photosystem I (PSI), cyclic electron flow around PSI, and state transitions. The polypeptide is Cytochrome f (Chara vulgaris (Common stonewort)).